Here is a 130-residue protein sequence, read N- to C-terminus: Small ribosomal subunit protein uS11 (130 aa).

The tract at residues 111–130 (IRDVTPVPHNGSRPPKRRRA) is disordered.

The protein belongs to the universal ribosomal protein uS11 family. In terms of assembly, part of the 30S ribosomal subunit. Interacts with proteins S7 and S18. Binds to IF-3.

Functionally, located on the platform of the 30S subunit, it bridges several disparate RNA helices of the 16S rRNA. Forms part of the Shine-Dalgarno cleft in the 70S ribosome. This is Small ribosomal subunit protein uS11 from Lactobacillus acidophilus (strain ATCC 700396 / NCK56 / N2 / NCFM).